We begin with the raw amino-acid sequence, 886 residues long: cytokinesis protein 3 (886 aa).

An SH3 domain is found at 6 to 67 (QLPCMVRALY…PSNFVHCLDI (62 aa)). Residues 72–88 (PGSSMSRTSASSFRYSS) show a composition bias toward low complexity. Positions 72–189 (PGSSMSRTSA…DLSRSTPSPL (118 aa)) are disordered. Positions 89-104 (PQKSSIDTPITSSDQG) are enriched in polar residues. Over residues 135-154 (LNSLGSSLSLKKSVSRPPSS) the composition is skewed to low complexity. The segment covering 155–188 (MSRTNLDVSSRWDNTADNDSQIDAQDLSRSTPSP) has biased composition (polar residues). Ser213 bears the Phosphoserine mark. Disordered regions lie at residues 219 to 290 (TKST…SPSD) and 358 to 393 (RRGSSKRKPSLQPTPPVSYPAHNVPQKGVRPASPHT). The span at 253–264 (DNSSKPRTSLQP) shows a compositional bias: polar residues.

Belongs to the CYK3 family.

Its subcellular location is the cell tip. In terms of biological role, involved in cytokinesis. This is cytokinesis protein 3 (cyk3) from Schizosaccharomyces pombe (strain 972 / ATCC 24843) (Fission yeast).